Consider the following 166-residue polypeptide: Transcriptional repressor NrdR (166 aa).

A zinc finger lies at 3 to 34; sequence CPHCHHNGSRVVDSRPTDDGRVIRRRRECESC. In terms of domain architecture, ATP-cone spans 49–139; the sequence is LLVIKKNGTR…VYRQFKDTGV (91 aa).

Belongs to the NrdR family. It depends on Zn(2+) as a cofactor.

Negatively regulates transcription of bacterial ribonucleotide reductase nrd genes and operons by binding to NrdR-boxes. The polypeptide is Transcriptional repressor NrdR (Levilactobacillus brevis (strain ATCC 367 / BCRC 12310 / CIP 105137 / JCM 1170 / LMG 11437 / NCIMB 947 / NCTC 947) (Lactobacillus brevis)).